We begin with the raw amino-acid sequence, 318 residues long: NADH-ubiquinone oxidoreductase chain 1 (318 aa).

A run of 8 helical transmembrane segments spans residues 3–23 (LITL…LTLV), 70–90 (MFII…TPLP), 100–120 (LGIL…LWSG), 146–166 (LAII…TTLI), 171–191 (YIWL…STLA), 222–242 (LFFL…TILF), 254–273 (LYTT…FLWI), and 294–314 (LPLT…LASI).

The protein belongs to the complex I subunit 1 family.

The protein localises to the mitochondrion inner membrane. The catalysed reaction is a ubiquinone + NADH + 5 H(+)(in) = a ubiquinol + NAD(+) + 4 H(+)(out). In terms of biological role, core subunit of the mitochondrial membrane respiratory chain NADH dehydrogenase (Complex I) that is believed to belong to the minimal assembly required for catalysis. Complex I functions in the transfer of electrons from NADH to the respiratory chain. The immediate electron acceptor for the enzyme is believed to be ubiquinone. The polypeptide is NADH-ubiquinone oxidoreductase chain 1 (MT-ND1) (Phyllostomus elongatus (Lesser spear-nosed bat)).